Consider the following 530-residue polypeptide: Cytochrome P450 2U1 (530 aa).

The next 4 membrane-spanning stretches (helical) occupy residues Val-21–Trp-41, Val-99–Phe-119, Ile-247–Phe-267, and Leu-328–Leu-348. Position 476 (Cys-476) interacts with heme. A helical membrane pass occupies residues Leu-481–Leu-501.

Belongs to the cytochrome P450 family. It depends on heme as a cofactor. In terms of tissue distribution, widely expressed. Expressed in heart, brain and liver.

Its subcellular location is the endoplasmic reticulum membrane. The protein resides in the microsome membrane. The protein localises to the mitochondrion inner membrane. The enzyme catalyses an omega-methyl-long-chain fatty acid + reduced [NADPH--hemoprotein reductase] + O2 = an omega-hydroxy-long-chain fatty acid + oxidized [NADPH--hemoprotein reductase] + H2O + H(+). It carries out the reaction (5Z,8Z,11Z,14Z)-eicosatetraenoate + reduced [NADPH--hemoprotein reductase] + O2 = 19-hydroxy-(5Z,8Z,11Z,14Z)-eicosatetraenoate + oxidized [NADPH--hemoprotein reductase] + H2O + H(+). The catalysed reaction is (5Z,8Z,11Z,14Z)-eicosatetraenoate + reduced [NADPH--hemoprotein reductase] + O2 = 20-hydroxy-(5Z,8Z,11Z,14Z)-eicosatetraenoate + oxidized [NADPH--hemoprotein reductase] + H2O + H(+). It catalyses the reaction N-[(5Z,8Z,11Z,14Z)-eicosatetraenoyl]-serotonin + reduced [NADPH--hemoprotein reductase] + O2 = 2-oxo-N-[(5Z,8Z,11Z,14Z)-eicosatetraenoyl]-serotonin + oxidized [NADPH--hemoprotein reductase] + H2O + H(+). Its function is as follows. A cytochrome P450 monooxygenase involved in the metabolism of arachidonic acid and its conjugates. Mechanistically, uses molecular oxygen inserting one oxygen atom into a substrate, and reducing the second into a water molecule, with two electrons provided by NADPH via cytochrome P450 reductase (CPR; NADPH-ferrihemoprotein reductase). Acts as an omega and omega-1 hydroxylase for arachidonic acid and possibly for other long chain fatty acids. May modulate the arachidonic acid signaling pathway and play a role in other fatty acid signaling processes. May down-regulate the biological activities of N-arachidonoyl-serotonin, an endocannabinoid that has anti-nociceptive effects through inhibition of fatty acid amide hydrolase FAAH, TRPV1 receptor and T-type calcium channels. Catalyzes C-2 oxidation of the indole ring of N-arachidonoyl-serotonin forming a less active product 2-oxo-N-arachidonoyl-serotonin. This Mus musculus (Mouse) protein is Cytochrome P450 2U1.